Here is a 354-residue protein sequence, read N- to C-terminus: Ornithine carbamoyltransferase, catabolic (354 aa).

Carbamoyl phosphate is bound by residues 67 to 70 (STRT), Q94, R118, and 145 to 148 (HPTQ). L-ornithine contacts are provided by residues N177, D241, and 245–246 (SM). Carbamoyl phosphate-binding positions include 284-285 (CL) and R329.

It belongs to the aspartate/ornithine carbamoyltransferase superfamily. OTCase family.

The protein resides in the cytoplasm. It catalyses the reaction carbamoyl phosphate + L-ornithine = L-citrulline + phosphate + H(+). It participates in amino-acid degradation; L-arginine degradation via ADI pathway; carbamoyl phosphate from L-arginine: step 2/2. Functionally, reversibly catalyzes the transfer of the carbamoyl group from carbamoyl phosphate (CP) to the N(epsilon) atom of ornithine (ORN) to produce L-citrulline. This chain is Ornithine carbamoyltransferase, catabolic (arcB), found in Lactococcus lactis subsp. cremoris (strain MG1363).